We begin with the raw amino-acid sequence, 439 residues long: MARIFQPKKKTQLNTRHQAVQVERLDHHGAGIAYLKKKPLFIDGALPGEEVVTQLVEEKSKFARGKLIKILKPSEARVEPFCSHYHECGGCDLQHLNYDQQLTHKQQTLRQLMRKFAGSDIELGAPVLGESLGYRRRARVSLFVDKKTRQLHFGFRKKQSKQIAQVTDCPVLAPELNVLLPEIYSTLKAFKKPEQLGHVELVLGDNAPCITLRHLNKLTEKETNTLVELAKRHQASLYLMPETDQLDLVEGEVPFYQEAGVTVPFTPNNFIQVNQAVNQKMVAQAVDWLDPKSDERVLDLFCGLGNFSLPIAKRAKHVVGVEGVAEMVEKAVNNASLNQINNARFYHANLEQDFEGQVWAAEQFDKVLLDPARAGASGIIDQVSVLGARRIVYVSCNPATLARDSQSLLEQGYQLTKLGMLDMFPHTSHLESMALFEKS.

The 60-residue stretch at 10–69 (KTQLNTRHQAVQVERLDHHGAGIAYLKKKPLFIDGALPGEEVVTQLVEEKSKFARGKLIK) folds into the TRAM domain. Cys82, Cys88, Cys91, and Cys169 together coordinate [4Fe-4S] cluster. The S-adenosyl-L-methionine site is built by Gln272, Phe301, Asn306, Glu322, Asn349, and Asp370. Catalysis depends on Cys396, which acts as the Nucleophile.

The protein belongs to the class I-like SAM-binding methyltransferase superfamily. RNA M5U methyltransferase family. RlmD subfamily.

The enzyme catalyses uridine(1939) in 23S rRNA + S-adenosyl-L-methionine = 5-methyluridine(1939) in 23S rRNA + S-adenosyl-L-homocysteine + H(+). Its function is as follows. Catalyzes the formation of 5-methyl-uridine at position 1939 (m5U1939) in 23S rRNA. In Vibrio campbellii (strain ATCC BAA-1116), this protein is 23S rRNA (uracil(1939)-C(5))-methyltransferase RlmD.